Here is a 522-residue protein sequence, read N- to C-terminus: Monogalactosyldiacylglycerol synthase, chloroplastic (522 aa).

The transit peptide at 1-98 (MSHPSTVTSE…RIPLGFSSIG (98 aa)) directs the protein to the chloroplast.

Belongs to the glycosyltransferase 28 family. Homodimer. Zn(2+) is required as a cofactor.

Its subcellular location is the plastid. It is found in the chloroplast inner membrane. It carries out the reaction a 1,2-diacyl-sn-glycerol + UDP-alpha-D-galactose = a 1,2-diacyl-3-O-(beta-D-galactosyl)-sn-glycerol + UDP + H(+). Its activity is regulated as follows. Inhibited by ortho-phenanthroline and UDP (competitive inhibitor relatively to UDP-Gal only) and inactivated by citraconic anhydride, tert-butoxycarbonyl-L-methionine hydrosuccinimidyl ester (SLR) and N-ethylmaleimide (NEM). Functionally, involved in the synthesis of the major structural component of photosynthetic membranes. The 1,2-diacylglycerol substrate preference is 18:2/18:2 &gt; 18:0/18:1 &gt; 18:1/18:1 &gt; 18:1/16:0 &gt; 16:0/18:2 &gt; 18:3/18:3 &gt; 16:0/18:1 &gt; 16:0/16:0 &gt; 18:0/18:0. This Spinacia oleracea (Spinach) protein is Monogalactosyldiacylglycerol synthase, chloroplastic (MGD A).